We begin with the raw amino-acid sequence, 165 residues long: Large ribosomal subunit protein uL10 (165 aa).

The protein belongs to the universal ribosomal protein uL10 family. In terms of assembly, part of the ribosomal stalk of the 50S ribosomal subunit. The N-terminus interacts with L11 and the large rRNA to form the base of the stalk. The C-terminus forms an elongated spine to which L12 dimers bind in a sequential fashion forming a multimeric L10(L12)X complex.

In terms of biological role, forms part of the ribosomal stalk, playing a central role in the interaction of the ribosome with GTP-bound translation factors. The sequence is that of Large ribosomal subunit protein uL10 from Burkholderia mallei (strain NCTC 10229).